The following is a 346-amino-acid chain: MHSSLIKLGFLLLLLQVSLSHAQLSPSFYDKTCPQVFDIVTNTIVNALRSDPRIAASILRLHFHDCFVNGCDASILLDNTTSFRTEKDAFGNANSARGFDVIDKMKAAIEKACPRTVSCADMLAIAAKESIVLAGGPSWMVPNGRRDSLRGFMDLANDNLPGPSSTLKQLKDRFKNVGLDRSSDLVALSGGHTFGKSQCQFIMDRLYNFGETGLPDPTLDKSYLATLRKQCPRNGNQSVLVDFDLRTPTLFDNKYYVNLKENKGLIQSDQELFSSPDAADTLPLVRAYADGQGTFFDAFVKAIIRMSSLSPLTGKQGEIRLNCRVVNSKSKIMDVVDDALEFASFM.

The first 22 residues, 1–22 (MHSSLIKLGFLLLLLQVSLSHA), serve as a signal peptide directing secretion. Glutamine 23 carries the pyrrolidone carboxylic acid modification. Intrachain disulfides connect cysteine 33–cysteine 113, cysteine 66–cysteine 71, cysteine 119–cysteine 323, and cysteine 199–cysteine 231. Catalysis depends on histidine 64, which acts as the Proton acceptor. 5 residues coordinate Ca(2+): aspartate 65, valine 68, glycine 70, aspartate 72, and serine 74. Asparagine 79 is a glycosylation site (N-linked (GlcNAc...) asparagine). Proline 161 contributes to the substrate binding site. Histidine 192 contributes to the heme b binding site. Threonine 193 lines the Ca(2+) pocket. N-linked (GlcNAc...) asparagine glycosylation occurs at asparagine 236. Ca(2+) contacts are provided by aspartate 244, threonine 247, and aspartate 252.

Belongs to the peroxidase family. Classical plant (class III) peroxidase subfamily. Heme b serves as cofactor. The cofactor is Ca(2+).

The protein localises to the secreted. Its subcellular location is the vacuole. The catalysed reaction is 2 a phenolic donor + H2O2 = 2 a phenolic radical donor + 2 H2O. In terms of biological role, removal of H(2)O(2), oxidation of toxic reductants, biosynthesis and degradation of lignin, suberization, auxin catabolism, response to environmental stresses such as wounding, pathogen attack and oxidative stress. These functions might be dependent on each isozyme/isoform in each plant tissue. This is Peroxidase 38 (PER38) from Arabidopsis thaliana (Mouse-ear cress).